Reading from the N-terminus, the 209-residue chain is Small ribosomal subunit protein uS4 (209 aa).

One can recognise an S4 RNA-binding domain in the interval 98-158 (SRVDNIVYRL…EKSRSLAAIK (61 aa)).

It belongs to the universal ribosomal protein uS4 family. Part of the 30S ribosomal subunit. Contacts protein S5. The interaction surface between S4 and S5 is involved in control of translational fidelity.

Functionally, one of the primary rRNA binding proteins, it binds directly to 16S rRNA where it nucleates assembly of the body of the 30S subunit. In terms of biological role, with S5 and S12 plays an important role in translational accuracy. The polypeptide is Small ribosomal subunit protein uS4 (Pseudothermotoga lettingae (strain ATCC BAA-301 / DSM 14385 / NBRC 107922 / TMO) (Thermotoga lettingae)).